The primary structure comprises 180 residues: Nucleoside triphosphate/diphosphate phosphatase (180 aa).

Residue Arg-26 is the Proton donor of the active site. The Mg(2+) site is built by Asn-90, Asp-106, Asp-108, Asp-110, Asp-123, and Glu-126.

The protein belongs to the Ntdp family. Mg(2+) serves as cofactor.

The enzyme catalyses a ribonucleoside 5'-triphosphate + H2O = a ribonucleoside 5'-diphosphate + phosphate + H(+). It catalyses the reaction a ribonucleoside 5'-diphosphate + H2O = a ribonucleoside 5'-phosphate + phosphate + H(+). Its function is as follows. Has nucleoside phosphatase activity towards nucleoside triphosphates and nucleoside diphosphates. This is Nucleoside triphosphate/diphosphate phosphatase from Staphylococcus haemolyticus (strain JCSC1435).